The primary structure comprises 39 residues: Mu-like prophage FluMu protein com (39 aa).

Belongs to the com family.

This Haemophilus influenzae (strain ATCC 51907 / DSM 11121 / KW20 / Rd) protein is Mu-like prophage FluMu protein com.